The chain runs to 198 residues: LIM domain-containing protein D (198 aa).

An LIM zinc-binding domain is found at 5–65 (GKCTRCQKTV…ANHYPVGGLS (61 aa)).

Its subcellular location is the cell projection. It is found in the pseudopodium. It localises to the cytoplasm. The protein resides in the cell cortex. The protein localises to the cytoskeleton. Binds to F-actin and may modulate the chemotactic response during early development and contribute to the maintenance of the strength of the actin cytoskeleton. The polypeptide is LIM domain-containing protein D (limD) (Dictyostelium discoideum (Social amoeba)).